A 791-amino-acid polypeptide reads, in one-letter code: Nuclear cap-binding protein subunit 1-A (791 aa).

A disordered region spans residues 1 to 24 (MSRRRHSDENDGGQAHKRRKTSEP). Residues 28–240 (EDRLESLICR…CLWAQIQKLK (213 aa)) form the MIF4G domain. Residues 641–714 (LHSTIRKMNK…SEQKNLFLVI (74 aa)) adopt a coiled-coil conformation. The interval 664 to 687 (QRLAKQHKHRDSDDNDEDSGRKDG) is disordered.

This sequence belongs to the NCBP1 family. Component of the nuclear cap-binding complex (CBC), a heterodimer composed of ncbp1/cbp80 and ncbp2/cbp20 that interacts with m7GpppG-capped RNA. Component of an alternative nuclear cap-binding complex (CBC) composed of ncbp1/cbp80 and ncbp3.

The protein resides in the nucleus. The protein localises to the cytoplasm. Its function is as follows. Component of the cap-binding complex (CBC), which binds cotranscriptionally to the 5'-cap of pre-mRNAs and is involved in various processes such as pre-mRNA splicing, translation regulation, nonsense-mediated mRNA decay, RNA-mediated gene silencing (RNAi) by microRNAs (miRNAs) and mRNA export. The CBC complex is involved in mRNA export from the nucleus, leading to the recruitment of the mRNA export machinery to the 5'-end of mRNA and to mRNA export in a 5' to 3' direction through the nuclear pore. The CBC complex is also involved in mediating U snRNA and intronless mRNAs export from the nucleus. The CBC complex is essential for a pioneer round of mRNA translation, before steady state translation when the CBC complex is replaced by cytoplasmic cap-binding protein eIF4E. The pioneer round of mRNA translation mediated by the CBC complex plays a central role in nonsense-mediated mRNA decay (NMD), NMD only taking place in mRNAs bound to the CBC complex, but not on eIF4E-bound mRNAs. The CBC complex enhances NMD in mRNAs containing at least one exon-junction complex (EJC), promoting the interaction between UPF1 and UPF2. The CBC complex is also involved in 'failsafe' NMD, which is independent of the EJC complex, while it does not participate in Staufen-mediated mRNA decay (SMD). During cell proliferation, the CBC complex is also involved in microRNAs (miRNAs) biogenesis via its interaction with SRRT/ARS2 and is required for miRNA-mediated RNA interference. The CBC complex also acts as a negative regulator of parn, thereby acting as an inhibitor of mRNA deadenylation. In the CBC complex, NCBP1/CBP80 does not bind directly capped RNAs (m7GpppG-capped RNA) but is required to stabilize the movement of the N-terminal loop of NCBP2/CBP20 and lock the CBC into a high affinity cap-binding state with the cap structure. Associates with NCBP3 to form an alternative cap-binding complex (CBC) which plays a key role in mRNA export. The conventional CBC with NCBP2 binds both small nuclear RNA (snRNA) and messenger (mRNA) and is involved in their export from the nucleus whereas the alternative CBC with NCBP3 does not bind snRNA and associates only with mRNA thereby playing a role only in mRNA export. This chain is Nuclear cap-binding protein subunit 1-A (ncbp1-a), found in Xenopus laevis (African clawed frog).